A 579-amino-acid polypeptide reads, in one-letter code: Peptidyl-prolyl cis-trans isomerase-like 2 (579 aa).

A U-box domain is found at 42–115 (RRLPFNFCSL…GEYVDPVTYK (74 aa)). Residues 227-261 (AERAQRAESGAASKGLTKPGMSATAASQKTVSHQA) form a disordered region. Over residues 250–259 (TAASQKTVSH) the composition is skewed to polar residues. The region spanning 311–470 (QKGYARISTT…PDIRIKDVTI (160 aa)) is the PPIase cyclophilin-type domain. Positions 555 to 579 (EGPEPEPAKKKFKGGGGFGDFSSWD) are disordered.

Belongs to the cyclophilin-type PPIase family. PPIL2 subfamily.

Its subcellular location is the nucleus. The catalysed reaction is [protein]-peptidylproline (omega=180) = [protein]-peptidylproline (omega=0). It carries out the reaction S-ubiquitinyl-[E2 ubiquitin-conjugating enzyme]-L-cysteine + [acceptor protein]-L-lysine = [E2 ubiquitin-conjugating enzyme]-L-cysteine + N(6)-ubiquitinyl-[acceptor protein]-L-lysine.. It functions in the pathway protein modification; protein ubiquitination. In terms of biological role, may catalyze the cis-trans isomerization of proline imidic peptide bonds in oligopeptides thereby assisting the folding of proteins. May also function as a chaperone, playing a role in intracellular transport of proteins. May also have a protein ubiquitin ligase activity acting as an E3 ubiquitin protein ligase or as a ubiquitin-ubiquitin ligase promoting elongation of ubiquitin chains on proteins. The sequence is that of Peptidyl-prolyl cis-trans isomerase-like 2 (cyp8) from Aspergillus fumigatus (strain ATCC MYA-4609 / CBS 101355 / FGSC A1100 / Af293) (Neosartorya fumigata).